The sequence spans 225 residues: Orotate phosphoribosyltransferase (225 aa).

Lys29 contributes to the 5-phospho-alpha-D-ribose 1-diphosphate binding site. 37 to 38 (FF) serves as a coordination point for orotate. Residues 75 to 76 (YK), Arg105, Lys106, Lys109, His111, and 130 to 138 (DDVITAGTS) each bind 5-phospho-alpha-D-ribose 1-diphosphate. Orotate-binding residues include Thr134 and Arg162.

The protein belongs to the purine/pyrimidine phosphoribosyltransferase family. PyrE subfamily. As to quaternary structure, homodimer. The cofactor is Mg(2+).

It catalyses the reaction orotidine 5'-phosphate + diphosphate = orotate + 5-phospho-alpha-D-ribose 1-diphosphate. Its pathway is pyrimidine metabolism; UMP biosynthesis via de novo pathway; UMP from orotate: step 1/2. Functionally, catalyzes the transfer of a ribosyl phosphate group from 5-phosphoribose 1-diphosphate to orotate, leading to the formation of orotidine monophosphate (OMP). In Bordetella petrii (strain ATCC BAA-461 / DSM 12804 / CCUG 43448), this protein is Orotate phosphoribosyltransferase.